The following is a 130-amino-acid chain: Small ribosomal subunit protein uS8 (130 aa).

Belongs to the universal ribosomal protein uS8 family. In terms of assembly, part of the 30S ribosomal subunit.

One of the primary rRNA binding proteins, it binds directly to 16S rRNA central domain where it helps coordinate assembly of the platform of the 30S subunit. The polypeptide is Small ribosomal subunit protein uS8 (Methanococcus maripaludis (strain C5 / ATCC BAA-1333)).